Consider the following 1159-residue polypeptide: PAN2-PAN3 deadenylation complex catalytic subunit pan2 (1159 aa).

One copy of the WD repeat lies at 276–315; that stretch reads ANVSFMLGIDISPSGEALAINDAECMVHLWGSPAKIHFNE. A linker region spans residues 316–451; sequence MSKEVELADV…GAKLNGEAED (136 aa). The 370-residue stretch at 452-821 folds into the USP domain; sequence DPLLKYSNVE…VPCVLAFQVK (370 aa). An Exonuclease domain is found at 872-1048; that stretch reads LDTEFVDLEK…IEDARMALRL (177 aa). 4 residues coordinate a divalent metal cation: Asp-873, Glu-875, Asp-982, and Asp-1041. A disordered region spans residues 1094-1159; it reads TAVTMQNTNS…GDFFGGSPLK (66 aa). Polar residues predominate over residues 1096-1106; that stretch reads VTMQNTNSGRN. Over residues 1107–1128 the composition is skewed to low complexity; it reads TPTVPDAAGAPAVPASAPTTPG. A compositionally biased stretch (gly residues) spans 1143–1153; sequence TFSGPGAGDFF.

This sequence belongs to the peptidase C19 family. PAN2 subfamily. Forms a heterotrimer with an asymmetric homodimer of the regulatory subunit pan3 to form the poly(A)-nuclease (PAN) deadenylation complex. Requires a divalent metal cation as cofactor.

It localises to the cytoplasm. It carries out the reaction Exonucleolytic cleavage of poly(A) to 5'-AMP.. Its activity is regulated as follows. Positively regulated by the regulatory subunit pan3. In terms of biological role, catalytic subunit of the poly(A)-nuclease (PAN) deadenylation complex, one of two cytoplasmic mRNA deadenylases involved in mRNA turnover. PAN specifically shortens poly(A) tails of RNA and the activity is stimulated by poly(A)-binding protein pab1. PAN deadenylation is followed by rapid degradation of the shortened mRNA tails by the CCR4-NOT complex. Deadenylated mRNAs are then degraded by two alternative mechanisms, namely exosome-mediated 3'-5' exonucleolytic degradation, or deadenylation-dependent mRNA decaping and subsequent 5'-3' exonucleolytic degradation by xrn1. May also be involved in post-transcriptional maturation of mRNA poly(A) tails. This is PAN2-PAN3 deadenylation complex catalytic subunit pan2 from Aspergillus terreus (strain NIH 2624 / FGSC A1156).